Reading from the N-terminus, the 138-residue chain is Nucleoside diphosphate kinase (138 aa).

Positions 9, 57, 85, 91, 102, and 112 each coordinate ATP. The active-site Pros-phosphohistidine intermediate is the histidine 115.

The protein belongs to the NDK family. As to quaternary structure, homotetramer. Mg(2+) serves as cofactor.

It localises to the cytoplasm. It carries out the reaction a 2'-deoxyribonucleoside 5'-diphosphate + ATP = a 2'-deoxyribonucleoside 5'-triphosphate + ADP. The enzyme catalyses a ribonucleoside 5'-diphosphate + ATP = a ribonucleoside 5'-triphosphate + ADP. Major role in the synthesis of nucleoside triphosphates other than ATP. The ATP gamma phosphate is transferred to the NDP beta phosphate via a ping-pong mechanism, using a phosphorylated active-site intermediate. This Deinococcus radiodurans (strain ATCC 13939 / DSM 20539 / JCM 16871 / CCUG 27074 / LMG 4051 / NBRC 15346 / NCIMB 9279 / VKM B-1422 / R1) protein is Nucleoside diphosphate kinase.